The chain runs to 260 residues: Small ribosomal subunit protein uS2 (260 aa).

It belongs to the universal ribosomal protein uS2 family.

The protein is Small ribosomal subunit protein uS2 of Staphylococcus carnosus (strain TM300).